A 113-amino-acid chain; its full sequence is MLNLIQTLRMEATQKSRHKKTQIQSGDILSITTTQYKNKKRKQNLKGICIGIKKRIGYTTIQLRNFIGGVSQEQSFILESPIINNIEIIGKIKGNTKAKKYYLRTKSPSENKV.

The protein belongs to the bacterial ribosomal protein bL19 family.

Its subcellular location is the mitochondrion. The sequence is that of Large ribosomal subunit protein bL19m (RPL19) from Reclinomonas americana.